The following is a 162-amino-acid chain: Ribosome maturation factor RimP (162 aa).

The protein belongs to the RimP family.

The protein localises to the cytoplasm. Functionally, required for maturation of 30S ribosomal subunits. The protein is Ribosome maturation factor RimP of Ralstonia pickettii (strain 12J).